The following is a 215-amino-acid chain: 5'-deoxynucleotidase YGK1 (215 aa).

One can recognise an HD domain in the interval I58–L164. A divalent metal cation contacts are provided by H61, H89, D90, E93, D98, I99, and D159.

This sequence belongs to the HDDC2 family. In terms of assembly, homodimer. It depends on Mn(2+) as a cofactor. Co(2+) is required as a cofactor. Mg(2+) serves as cofactor.

It catalyses the reaction a 2'-deoxyribonucleoside 5'-phosphate + H2O = a 2'-deoxyribonucleoside + phosphate. Catalyzes the dephosphorylation of the nucleoside 5'-monophosphates deoxyadenosine monophosphate (dAMP), deoxycytidine monophosphate (dCMP), deoxyguanosine monophosphate (dGMP) and deoxythymidine monophosphate (dTMP). The polypeptide is 5'-deoxynucleotidase YGK1 (Saccharomyces cerevisiae (strain ATCC 204508 / S288c) (Baker's yeast)).